Reading from the N-terminus, the 541-residue chain is Chaperonin GroEL (541 aa).

ATP is bound by residues 29 to 32, 86 to 90, Gly413, and Asp495; these read TLGP and DGTTT.

As to quaternary structure, forms a cylinder of 14 subunits composed of two heptameric rings stacked back-to-back. Interacts with the co-chaperonin GroES.

It is found in the cytoplasm. The enzyme catalyses ATP + H2O + a folded polypeptide = ADP + phosphate + an unfolded polypeptide.. Together with its co-chaperonin GroES, plays an essential role in assisting protein folding. The GroEL-GroES system forms a nano-cage that allows encapsulation of the non-native substrate proteins and provides a physical environment optimized to promote and accelerate protein folding. The polypeptide is Chaperonin GroEL (Thermoanaerobacter brockii (Thermoanaerobium brockii)).